The following is a 440-amino-acid chain: 3-phosphoshikimate 1-carboxyvinyltransferase (440 aa).

3 residues coordinate 3-phosphoshikimate: Lys-25, Ser-26, and Arg-30. Lys-25 is a phosphoenolpyruvate binding site. The phosphoenolpyruvate site is built by Gly-96 and Arg-124. 3-phosphoshikimate contacts are provided by Ser-168, Gln-169, Asp-310, and Lys-337. Phosphoenolpyruvate is bound at residue Gln-169. Asp-310 (proton acceptor) is an active-site residue. Residues Arg-341, Arg-382, and Lys-409 each contribute to the phosphoenolpyruvate site.

Belongs to the EPSP synthase family. Monomer.

It is found in the cytoplasm. The enzyme catalyses 3-phosphoshikimate + phosphoenolpyruvate = 5-O-(1-carboxyvinyl)-3-phosphoshikimate + phosphate. The protein operates within metabolic intermediate biosynthesis; chorismate biosynthesis; chorismate from D-erythrose 4-phosphate and phosphoenolpyruvate: step 6/7. Functionally, catalyzes the transfer of the enolpyruvyl moiety of phosphoenolpyruvate (PEP) to the 5-hydroxyl of shikimate-3-phosphate (S3P) to produce enolpyruvyl shikimate-3-phosphate and inorganic phosphate. This Chlamydia trachomatis serovar A (strain ATCC VR-571B / DSM 19440 / HAR-13) protein is 3-phosphoshikimate 1-carboxyvinyltransferase.